The chain runs to 484 residues: MDEPMVDASGAQVKVTFTTTEADLQLPESKRQLLVPADIRRYGLSRVLNSESMLDTGSIPFDFLVNGSFLRTSLEDYLTNNGLSLESNLTLQYVRSLIPPVYEASFEHDDWVSAVDVLSASSPSGRWSGDNFQRGQDRILSASFDGLLRIWNASGQVIATSPSGSHGGHTASIKAAKFLTNSQLASAGMDRTVRVWKYTESDHFSGDLKPTLELYGHTGSIDSLEVDGASKRILTASADGSIGFWSTSKASAPEADSSLLPNAHTSKRRKVTTSVTAAQRGPLSLMPIHSAPASAAVFDPRDRTVAYSASQDHTLRTIDLTTSTVVTTHSTSHPLLSLCALPRGNSASPLLAAGTAARHITLVDPRASAATTSVMTLRGHANKPVGLCASPRNEYALVSGAHDGTCRVWDLRSVRPATQEEGGLGSVSEAVYVIEREGAKGGKKTVAGEGCKVFGVVWDAELGIVSGAEDKRVQINAGRDVVAE.

The interval 13–95 (VKVTFTTTEA…ESNLTLQYVR (83 aa)) is ubiquitin-like (UBL) domain. WD repeat units lie at residues 122-161 (SPSG…IATS), 168-206 (GHTA…HFSG), 216-255 (GHTG…APEA), 288-328 (IHSA…VVTT), 330-373 (STSH…ATTS), 379-419 (GHAN…PATQ), and 448-484 (GEGC…VVAE).

Belongs to the WD repeat WDR12/YTM1 family. Component of the NOP7 complex, composed of ERB1, NOP7 and YTM1. The complex is held together by ERB1, which interacts with NOP7 via its N-terminal domain and with YTM1 via a high-affinity interaction between the seven-bladed beta-propeller domains of the 2 proteins. The NOP7 complex associates with the 66S pre-ribosome. Interacts (via UBL domain) with MDN1 (via VWFA/MIDAS domain).

The protein localises to the nucleus. Its subcellular location is the nucleolus. The protein resides in the nucleoplasm. Component of the NOP7 complex, which is required for maturation of the 25S and 5.8S ribosomal RNAs and formation of the 60S ribosome. This Chaetomium globosum (strain ATCC 6205 / CBS 148.51 / DSM 1962 / NBRC 6347 / NRRL 1970) (Soil fungus) protein is Ribosome biogenesis protein YTM1.